Here is a 104-residue protein sequence, read N- to C-terminus: Circadian clock oscillator protein KaiB (104 aa).

It belongs to the KaiB family. In terms of assembly, the KaiABC complex composition changes during the circadian cycle to control KaiC phosphorylation. Complexes KaiC(6), KaiA(2-4):KaiC(6), KaiB(6):KaiC(6) and KaiC(6):KaiB(6):KaiA(12) are among the most important forms, many form cooperatively. Undergoes a major conformational rearrangment; in the free state forms homotetramers as a dimer of dimers. When bound to the CI domain of KaiC switches to a monomeric thioredoxin-fold (KaiB(fs)). KaiB(fs) binds CikA, leading it to dephosphorylate phospho-RpaA.

In terms of biological role, key component of the KaiABC oscillator complex, which constitutes the main circadian regulator in cyanobacteria. Complex composition changes during the circadian cycle to control KaiC phosphorylation. KaiA stimulates KaiC autophosphorylation, while KaiB sequesters KaiA, leading to KaiC autodephosphorylation. Phospho-Ser-431 KaiC accumulation triggers binding of KaiB to form the KaiB(6):KaiC(6) complex, leading to changes in output regulators CikA and SasA. KaiB switches to a thioredoxin-like fold (KaiB(fs)) when bound to KaiC. KaiB(6):KaiC(6) formation exposes a site for KaiA binding that sequesters KaiA from KaiC, making the KaiC(6):KaiB(6):KaiA(12) complex that results in KaiC autodephosphorylation. Functionally, a metamorphic protein which reversibly switches between an inactive tetrameric fold and a rare, thioredoxin-like monomeric fold (KaiB(fs)). KaiB(fs) binds phospho-KaiC, KaiA and CikA. KaiA and CikA compete for binding to KaiB(fs), and KaiB(fs) and SasA compete for binding to KaiC, thus the clock oscillator and output signal pathway are tightly coupled. In Microcystis aeruginosa (strain NIES-843 / IAM M-2473), this protein is Circadian clock oscillator protein KaiB.